The following is a 569-amino-acid chain: Cytosolic purine 5'-nucleotidase (569 aa).

The Nucleophile role is filled by Asp52. IMP-binding residues include Asp52 and Asp54. The Mg(2+) site is built by Asp52 and Asp54. The active-site Proton donor is Asp54. ATP is bound by residues Arg144 and Asn154. Residues Arg202, Asp206, Lys215, Thr249, Asn250, Ser251, and Lys292 each contribute to the IMP site. Asp351 provides a ligand contact to Mg(2+). ATP-binding residues include Gln453 and Arg456. A disordered region spans residues Ser527–Glu569. Positions His548–Glu569 are required for tetramer assembly. Over residues Glu550–Glu569 the composition is skewed to acidic residues.

It belongs to the 5'(3')-deoxyribonucleotidase family. In terms of assembly, homotetramer. Requires Mg(2+) as cofactor.

It localises to the cytoplasm. It is found in the cytosol. The enzyme catalyses a ribonucleoside 5'-phosphate + H2O = a ribonucleoside + phosphate. The catalysed reaction is a 2'-deoxyribonucleoside + a ribonucleoside 5'-phosphate = a ribonucleoside + a 2'-deoxyribonucleoside 5'-phosphate. It catalyses the reaction IMP + H2O = inosine + phosphate. It carries out the reaction GMP + H2O = guanosine + phosphate. The enzyme catalyses dGMP + H2O = 2'-deoxyguanosine + phosphate. The catalysed reaction is dIMP + H2O = 2'-deoxyinosine + phosphate. It catalyses the reaction XMP + H2O = xanthosine + phosphate. It carries out the reaction inosine + GMP = guanosine + IMP. The enzyme catalyses dGMP + inosine = 2'-deoxyguanosine + IMP. The catalysed reaction is dIMP + inosine = 2'-deoxyinosine + IMP. It catalyses the reaction inosine + UMP = uridine + IMP. It carries out the reaction inosine + CMP = cytidine + IMP. The enzyme catalyses inosine + AMP = IMP + adenosine. With respect to regulation, allosterically activated by various compounds including ATP, 2,3-BPG/2,3-Bisphosphoglyceric acid and Ap4A/P1,P4-bis(5'-adenosyl) tetraphosphate. Binding of an allosteric activator is a prerequisiste to magnesium and substrate binding. Inhibited by inorganic phosphate. Inhibited by inosine, guanosine, p-chloromercuribenzoate and NaF. Broad specificity cytosolic 5'-nucleotidase that catalyzes the dephosphorylation of 6-hydroxypurine nucleoside 5'-monophosphates. In addition, possesses a phosphotransferase activity by which it can transfer a phosphate from a donor nucleoside monophosphate to an acceptor nucleoside, preferably inosine, deoxyinosine and guanosine. Has the highest activities for IMP and GMP followed by dIMP, dGMP and XMP. Could also catalyze the transfer of phosphates from pyrimidine monophosphates but with lower efficiency. Through these activities regulates the purine nucleoside/nucleotide pools within the cell. The sequence is that of Cytosolic purine 5'-nucleotidase (NT5C2) from Gallus gallus (Chicken).